The chain runs to 831 residues: Phenylalanine--tRNA ligase beta subunit (831 aa).

The region spanning 44–155 (GPVDGPVTVG…GAAEPGADGA (112 aa)) is the tRNA-binding domain. Positions 414 to 489 (WSPPPIRMGV…RLEGLEVIPS (76 aa)) constitute a B5 domain. 4 residues coordinate Mg(2+): D467, D473, E476, and E477. In terms of domain architecture, FDX-ACB spans 737 to 830 (SPYPAVFQDV…AAERVGAVLR (94 aa)).

The protein belongs to the phenylalanyl-tRNA synthetase beta subunit family. Type 1 subfamily. In terms of assembly, tetramer of two alpha and two beta subunits. Mg(2+) is required as a cofactor.

Its subcellular location is the cytoplasm. The catalysed reaction is tRNA(Phe) + L-phenylalanine + ATP = L-phenylalanyl-tRNA(Phe) + AMP + diphosphate + H(+). In Mycobacterium tuberculosis (strain ATCC 25618 / H37Rv), this protein is Phenylalanine--tRNA ligase beta subunit (pheT).